The following is a 344-amino-acid chain: Heat-inducible transcription repressor HrcA (344 aa).

This sequence belongs to the HrcA family.

In terms of biological role, negative regulator of class I heat shock genes (grpE-dnaK-dnaJ and groELS operons). Prevents heat-shock induction of these operons. The chain is Heat-inducible transcription repressor HrcA from Streptococcus agalactiae serotype III (strain NEM316).